The primary structure comprises 1061 residues: MGDPGSEIIESVPPAGPEASESTTDENEDDIQFVSEGPLRPVLEYIDLVSSDDEEPSTSYTDENIKRKDHIDYQKDKVALTLARLARHVEVEKQQKEEKNRAFREKIDFQHAHGLQELEFIRGHSDTEAARLCVDQWLKMPGLKTGTINCGTKSSFRRGGHTWVSGKPILCPIMHCNKEFDNGHLLLGHLKRFDHSPCDPTITLHGPFFSSFACVVCYKKFVTQQQYRDHLFDKEATDDGHNNNLLPQIIQCFACPNCFLLFSRKEECSKHMSGKNHFHQSFKLGDNKGIAHPISFPSFAKKLLISLCKDVPFQVKCVACHKTLRSHMELTAHFRVHCRNAGPVAVAEKSITQVAEKFILRGYCPDCNQVFVDETSTQNHKQNSGHKVRVINSVEESVLLYCHSSEGNKDPSSDLHLLLDQSKFSSLKRTMSIKESSSLECIAIPKKKMNLKDKSHEGVACVQKEKSVVKTWFCECNQRFPSEDAVEKHVFSANTMGYKCVVCGKVCDDSGVIRLHMSRIHGGAHLNNFLFWCRTCKKELTRKDTIMAHVTEFHNGHRYFYEMDEVEGETLPSSSTTLDNLTANKPSSAITVIDHSPANSSPRGKWQCRICEDMFDSQEYVKQHCMSLASHKFHRYSCAHCRKPFHKIETLYRHCQDEHDNEIKIKYFCGLCDLIFNVEEAFLSHYEEHHSIDYVFVSEKTETSIKTEDDFPVIETSNQLTCGCRESYICKVNRKEDYSRCLQIMLDKGKLWFRCSLCSATAQNLTDMNTHIHQVHKEKSDEEEQQYVIKCGTCTKAFHDPESAQQHFHRKHCFLQKPSVAHFGSEKSNLYKFTASASHTERKLKQAINYSKSLDMEKGVENDLSYQNIEEEIVELPDLDYLRTMTHIVFVDFDNWSNFFGHLPGHLNQGTFIWGFQGGNTNWKPPLNCKIYNYLNRIGCFFLHPRCSKRKDAADFAICMHAGRLDEQLPKQIPFTILSGDQGFLELENQFKKTQRPAHILNPHHLEGDMMCALLNSISDTTKECDSDDNMGAKNTSIGEEFISTEDVELEEAIRRSLEEM.

The disordered stretch occupies residues 1–38 (MGDPGSEIIESVPPAGPEASESTTDENEDDIQFVSEGP). The tract at residues 1 to 246 (MGDPGSEIIE…TDDGHNNNLL (246 aa)) is sufficient for E3 SUMO-protein ligase activity. The segment at 1 to 344 (MGDPGSEIIE…RVHCRNAGPV (344 aa)) is important for interaction with SUMO1 and SUMO2. An interaction with SUMO2 1 region spans residues 30-37 (DIQFVSEG). The short motif at 38–41 (PLRP) is the PLRP element. The interval 42–50 (VLEYIDLVS) is interaction with SUMO2 2. Residues lysine 75, lysine 77, lysine 106, isoleucine 121, alanine 130, leucine 138, lysine 139, lysine 144, and lysine 153 each participate in a glycyl lysine isopeptide (Lys-Gly) (interchain with G-Cter in SUMO2) cross-link. Position 155 is a phosphoserine (serine 155). Omega-N-methylarginine is present on arginine 158. Glycyl lysine isopeptide (Lys-Gly) (interchain with G-Cter in SUMO2) cross-links involve residues valine 164 and lysine 167. Positions 168-525 (PILCPIMHCN…HMSRIHGGAH (358 aa)) are important for interaction with SMAD4. The C2H2-type 1 zinc finger occupies 169 to 195 (ILCPIMHCNKEFDNGHLLLGHLKRFDH). Glycyl lysine isopeptide (Lys-Gly) (interchain with G-Cter in SUMO2) cross-links involve residues glutamine 226, glycine 240, proline 247, serine 263, lysine 270, lysine 275, lysine 283, aspartate 286, lysine 288, proline 293, lysine 301, and lysine 309. The C2H2-type 2 zinc finger occupies 253 to 277 (FACPNCFLLFSRKEECSKHMSGKNH). Residues 315–337 (VKCVACHKTLRSHMELTAHFRVH) form a C2H2-type 3 zinc finger. Lysine 357 is covalently cross-linked (Glycyl lysine isopeptide (Lys-Gly) (interchain with G-Cter in SUMO2)). Residues 362–386 (GYCPDCNQVFVDETSTQNHKQNSGH) form a C2H2-type 4 zinc finger. A Glycyl lysine isopeptide (Lys-Gly) (interchain with G-Cter in SUMO2) cross-link involves residue lysine 423. The residue at position 432 (serine 432) is a Phosphoserine. Residues lysine 434, lysine 446, lysine 452, lysine 454, lysine 464, phenylalanine 473, valine 490, cysteine 500, lysine 505, aspartate 508, glycine 522, tryptophan 532, lysine 543, and lysine 585 each participate in a glycyl lysine isopeptide (Lys-Gly) (interchain with G-Cter in SUMO2) cross-link. A C2H2-type 5 zinc finger spans residues 498-521 (YKCVVCGKVCDDSGVIRLHMSRIH). The C2H2-type 6 zinc-finger motif lies at 531–554 (FWCRTCKKELTRKDTIMAHVTEFH). A C2H2-type 7; atypical zinc finger spans residues 606–631 (WQCRICEDMFDSQEYVKQHCMSLASH). Glycyl lysine isopeptide (Lys-Gly) (interchain with G-Cter in SUMO2) cross-links involve residues lysine 632, lysine 647, and lysine 664. A C2H2-type 8 zinc finger spans residues 636–659 (YSCAHCRKPFHKIETLYRHCQDEH). Residues 667 to 690 (YFCGLCDLIFNVEEAFLSHYEEHH) form a C2H2-type 9 zinc finger. Lysine 706 is covalently cross-linked (Glycyl lysine isopeptide (Lys-Gly) (interchain with G-Cter in SUMO1); alternate). Residue lysine 706 forms a Glycyl lysine isopeptide (Lys-Gly) (interchain with G-Cter in SUMO2); alternate linkage. Residues lysine 731 and lysine 748 each participate in a glycyl lysine isopeptide (Lys-Gly) (interchain with G-Cter in SUMO2) cross-link. A C2H2-type 10 zinc finger spans residues 753–776 (FRCSLCSATAQNLTDMNTHIHQVH). Glycyl lysine isopeptide (Lys-Gly) (interchain with G-Cter in SUMO2) cross-links involve residues lysine 777, lysine 779, lysine 790, lysine 817, lysine 827, lysine 832, lysine 843, lysine 845, lysine 852, lysine 951, lysine 992, and lysine 993. A C2H2-type 11 zinc finger spans residues 789–812 (IKCGTCTKAFHDPESAQQHFHRKH). Residues 1050 to 1061 (LEEAIRRSLEEM) are important for ubiquitin binding.

It belongs to the krueppel C2H2-type zinc-finger protein family. Homooligomer. Interacts (via N-terminal region) with SUMO1. Interacts (via N-terminal region) with SUMO2. Interacts simultaneously with two SUMO2 chains. Identified in a complex with SUMO2 and UBE2I/UBC9, where one ZNF451 interacts with one UBE2I/UBC9 and two SUMO2 chains, one bound to the UBE2I/UBC9 active site and the other to another region of the same UBE2I/UBC9 molecule. Interacts (via C-terminus) with ubiquitin. Interacts (via N-terminal zinc-finger domains) with SMAD4 (via MH2 domain). Interacts with SMAD2 and SMAD3. Identified in a complex that contains at least ZNF451, SMAD2, SMAD3 and SMAD4. Interacts with EP300. Inhibits interaction between EP300 and the SMAD4 complex. Interacts with SIMC1. Sumoylated. Predominantly sumoylated on the N-terminal region that is important for interaction with SUMO1 and SUMO2. Sumoylation is important for localization in nuclear granules; desumoylation leads to diffuse nucleoplasmic location. Autosumoylated (in vitro). Sumoylation enhances E3 SUMO-protein ligase activity.

The protein resides in the nucleus. It localises to the PML body. The protein localises to the nucleoplasm. It participates in protein modification; protein sumoylation. Its function is as follows. E3 SUMO-protein ligase; has a preference for SUMO2 and SUMO3 and facilitates UBE2I/UBC9-mediated sumoylation of target proteins. Plays a role in protein SUMO2 modification in response to stress caused by DNA damage and by proteasome inhibitors (in vitro). Required for MCM4 sumoylation. Has no activity with SUMO1. Preferentially transfers an additional SUMO2 chain onto the SUMO2 consensus site 'Lys-11'. Negatively regulates transcriptional activation mediated by the SMAD4 complex in response to TGF-beta signaling. Inhibits EP300-mediated acetylation of histone H3 at 'Lys-9'. Plays a role in regulating the transcription of AR targets. This chain is E3 SUMO-protein ligase ZNF451 (ZNF451), found in Homo sapiens (Human).